We begin with the raw amino-acid sequence, 249 residues long: Probable transcriptional regulatory protein HY04AAS1_0501 (249 aa).

Belongs to the TACO1 family.

The protein localises to the cytoplasm. In Hydrogenobaculum sp. (strain Y04AAS1), this protein is Probable transcriptional regulatory protein HY04AAS1_0501.